A 382-amino-acid polypeptide reads, in one-letter code: 1-deoxy-D-xylulose 5-phosphate reductoisomerase (382 aa).

NADPH is bound by residues Thr10, Gly11, Ser12, Ile13, Asn38, and Asn120. Lys121 provides a ligand contact to 1-deoxy-D-xylulose 5-phosphate. Glu122 lines the NADPH pocket. Asp146 contacts Mn(2+). Residues Ser147, Glu148, Ser172, and His195 each coordinate 1-deoxy-D-xylulose 5-phosphate. Glu148 contributes to the Mn(2+) binding site. NADPH is bound at residue Gly201. 1-deoxy-D-xylulose 5-phosphate is bound by residues Ser208, Asn213, Lys214, and Glu217. Residue Glu217 participates in Mn(2+) binding.

This sequence belongs to the DXR family. Mg(2+) is required as a cofactor. Mn(2+) serves as cofactor.

The enzyme catalyses 2-C-methyl-D-erythritol 4-phosphate + NADP(+) = 1-deoxy-D-xylulose 5-phosphate + NADPH + H(+). It functions in the pathway isoprenoid biosynthesis; isopentenyl diphosphate biosynthesis via DXP pathway; isopentenyl diphosphate from 1-deoxy-D-xylulose 5-phosphate: step 1/6. Its function is as follows. Catalyzes the NADPH-dependent rearrangement and reduction of 1-deoxy-D-xylulose-5-phosphate (DXP) to 2-C-methyl-D-erythritol 4-phosphate (MEP). The chain is 1-deoxy-D-xylulose 5-phosphate reductoisomerase from Thermoanaerobacter sp. (strain X514).